The sequence spans 342 residues: Dihydroorotase (342 aa).

2 residues coordinate Zn(2+): H13 and H15. Residues 15 to 17 (HLR) and N41 each bind substrate. Residues K98, H135, and H173 each coordinate Zn(2+). At K98 the chain carries N6-carboxylysine. Residue H135 coordinates substrate. L218 is a binding site for substrate. Residue D246 participates in Zn(2+) binding. D246 is a catalytic residue. Positions 250 and 262 each coordinate substrate.

This sequence belongs to the metallo-dependent hydrolases superfamily. DHOase family. Class II DHOase subfamily. As to quaternary structure, homodimer. Requires Zn(2+) as cofactor.

It carries out the reaction (S)-dihydroorotate + H2O = N-carbamoyl-L-aspartate + H(+). It participates in pyrimidine metabolism; UMP biosynthesis via de novo pathway; (S)-dihydroorotate from bicarbonate: step 3/3. Functionally, catalyzes the reversible cyclization of carbamoyl aspartate to dihydroorotate. This chain is Dihydroorotase, found in Vibrio campbellii (strain ATCC BAA-1116).